The following is an 808-amino-acid chain: Phosphoinositide phosphatase SAC2 (808 aa).

An SAC domain is found at 158-551 (LCTVDLTKDF…GDTLALQYGG (394 aa)). The tract at residues 429 to 476 (FQNQNPSTLENDDGECSTYDPPSKDETAPNLVVENGNDSKDAKEDQQK) is disordered. The segment covering 465–476 (NDSKDAKEDQQK) has biased composition (basic and acidic residues). Positions 487-498 (RTNCIDCLDRTN) match the Phosphatase catalytic core motif.

Component of the PI(3,5)P2 regulatory complex at least composed of ATG18, SAC/FIG4, FAB1 and VAC14. The cofactor is Mg(2+). As to expression, ubiquitous with a higher level of expression in young seedlings than in other tissues.

The protein resides in the vacuole membrane. It carries out the reaction a 1,2-diacyl-sn-glycero-3-phospho-(1D-myo-inositol-3,5-bisphosphate) + H2O = a 1,2-diacyl-sn-glycero-3-phospho-(1D-myo-inositol-3-phosphate) + phosphate. Functionally, the PI(3,5)P2 regulatory complex regulates both the synthesis and turnover of phosphatidylinositol 3,5-bisphosphate (PtdIns(3,5)P2). This chain is Phosphoinositide phosphatase SAC2 (SAC2), found in Arabidopsis thaliana (Mouse-ear cress).